We begin with the raw amino-acid sequence, 177 residues long: MMHLKNITAGNPKTKEQYQLTKQFNIKWLYTEDGKNWYEEQKNFQPDTLKMVYDHNGVIICIEKDVSAINPEGANVVEVPDITANRRADISGKWMFKDGVVIKRTYTEEEQRQQAENEKQSLLQLVRDKTQLWDSQLRLGIISDENKQKLTEWMLYAQKVESTDTSSLPVTFPEQPE.

The protein belongs to the tfa family.

Its subcellular location is the virion. The protein resides in the host cytoplasm. In terms of biological role, chaperone involved in tail fiber assembly. Remains associated to the tail fiber and participates in the host receptor binding. Binds to the primary receptor. Two alternate tail fiber assembly proteins U and U' are encoded extending the host range of the virus. In Escherichia phage Mu (Bacteriophage Mu), this protein is Tail fiber assembly protein U' (U').